The chain runs to 160 residues: Eukaryotic translation initiation factor 5A-1/2 (160 aa).

The span at 1-12 (MSDEEHHFESKA) shows a compositional bias: basic and acidic residues. A disordered region spans residues 1–21 (MSDEEHHFESKADAGASKTYP). Hypusine is present on lysine 52.

It belongs to the eIF-5A family. In terms of processing, lys-52 undergoes hypusination, a unique post-translational modification that consists in the addition of a butylamino group from spermidine to lysine side chain, leading to the formation of the unusual amino acid hypusine. eIF-5As are the only known proteins to undergo this modification, which is essential for their function.

Translation factor that promotes translation elongation and termination, particularly upon ribosome stalling at specific amino acid sequence contexts. Binds between the exit (E) and peptidyl (P) site of the ribosome and promotes rescue of stalled ribosome: specifically required for efficient translation of polyproline-containing peptides as well as other motifs that stall the ribosome. Acts as a ribosome quality control (RQC) cofactor by joining the RQC complex to facilitate peptidyl transfer during CAT tailing step. The sequence is that of Eukaryotic translation initiation factor 5A-1/2 (EIF5A1) from Solanum tuberosum (Potato).